The primary structure comprises 50 residues: Protein hunchback (50 aa).

3 consecutive C2H2-type zinc fingers follow at residues His1–His5, Phe11–His33, and Tyr39–Tyr50.

It belongs to the hunchback C2H2-type zinc-finger protein family.

The protein localises to the nucleus. Gap class segmentation protein that controls development of head structures. The chain is Protein hunchback (hb) from Platynereis dumerilii (Dumeril's clam worm).